A 177-amino-acid chain; its full sequence is Calcium-binding protein CML38 (177 aa).

A compositionally biased stretch (polar residues) spans 1–11; that stretch reads MKNNTQPQSSF. The tract at residues 1-44 is disordered; it reads MKNNTQPQSSFKKLCRKLSPKREDSAGEIQQHNSSNGEDKNREL. EF-hand domains are found at residues 39–74, 75–110, 111–146, and 147–177; these read DKNR…LGEQ, LSDE…DDEE, EKKM…LGES, and RTTD…LMMR. Positions 52, 54, 56, 58, 63, 88, 90, 92, 94, and 99 each coordinate Ca(2+). 4 residues coordinate Ca(2+): aspartate 160, asparagine 162, aspartate 164, and glutamate 171.

As to quaternary structure, binds to ABCG36. As to expression, expressed in cotyledons and guard cells of young leaves. In mature root, expressed in the epidermis, trichoblasts, young lateral root and root tip. Expressed from stage 9 to 15 of flower development in anther wall.

Potential calcium sensor that binds calcium in vitro. The polypeptide is Calcium-binding protein CML38 (Arabidopsis thaliana (Mouse-ear cress)).